A 193-amino-acid polypeptide reads, in one-letter code: uncharacterized protein (193 aa).

This is an uncharacterized protein from Saccharomyces cerevisiae (strain ATCC 204508 / S288c) (Baker's yeast).